Here is a 644-residue protein sequence, read N- to C-terminus: Macrolide export ATP-binding/permease protein MacB (644 aa).

The 239-residue stretch at 4 to 242 (IECKNINRYF…SNVGRIQEKA (239 aa)) folds into the ABC transporter domain. Position 40 to 47 (40 to 47 (GQSGSGKS)) interacts with ATP. 4 helical membrane passes run 270–290 (LLTM…VALG), 524–544 (IALI…LVSV), 574–594 (LICI…SLVF), and 607–627 (AASV…FGFM).

This sequence belongs to the ABC transporter superfamily. Macrolide exporter (TC 3.A.1.122) family. In terms of assembly, homodimer.

It localises to the cell inner membrane. Functionally, non-canonical ABC transporter that contains transmembrane domains (TMD), which form a pore in the inner membrane, and an ATP-binding domain (NBD), which is responsible for energy generation. Overexpression confers resistance against macrolides. In Neisseria gonorrhoeae, this protein is Macrolide export ATP-binding/permease protein MacB.